The sequence spans 505 residues: ATP synthase subunit alpha (505 aa).

170 to 177 contacts ATP; the sequence is GDRQTGKT.

It belongs to the ATPase alpha/beta chains family. As to quaternary structure, F-type ATPases have 2 components, CF(1) - the catalytic core - and CF(0) - the membrane proton channel. CF(1) has five subunits: alpha(3), beta(3), gamma(1), delta(1), epsilon(1). CF(0) has four main subunits: a(1), b(1), b'(1) and c(9-12).

It is found in the cellular thylakoid membrane. It catalyses the reaction ATP + H2O + 4 H(+)(in) = ADP + phosphate + 5 H(+)(out). In terms of biological role, produces ATP from ADP in the presence of a proton gradient across the membrane. The alpha chain is a regulatory subunit. In Prochlorococcus marinus (strain MIT 9313), this protein is ATP synthase subunit alpha.